The chain runs to 395 residues: Probable L-tyrosine/L-aspartate decarboxylase (395 aa).

Lys-242 carries the post-translational modification N6-(pyridoxal phosphate)lysine.

This sequence belongs to the group II decarboxylase family. MfnA subfamily. The cofactor is pyridoxal 5'-phosphate.

The catalysed reaction is L-tyrosine + H(+) = tyramine + CO2. It catalyses the reaction L-aspartate + H(+) = beta-alanine + CO2. It participates in cofactor biosynthesis; methanofuran biosynthesis. It functions in the pathway cofactor biosynthesis; coenzyme A biosynthesis. In terms of biological role, catalyzes the decarboxylation of L-tyrosine to produce tyramine for methanofuran biosynthesis. Can also catalyze the decarboxylation of L-aspartate to produce beta-alanine for coenzyme A (CoA) biosynthesis. The chain is Probable L-tyrosine/L-aspartate decarboxylase from Methanosarcina barkeri (strain Fusaro / DSM 804).